The chain runs to 58 residues: MFTVFLLVVLVTTVVFSTSDHRPASNHENRRASKRISEMTWEECCTNPVCRQHYMHYC.

An N-terminal signal peptide occupies residues 1 to 17 (MFTVFLLVVLVTTVVFS). The propeptide occupies 18–35 (TSDHRPASNHENRRASKR). 2 cysteine pairs are disulfide-bonded: C44–C50 and C45–C58. Residues 46–48 (TNP) are lacks the Ser-Xaa-Pro motif that is crucial for potent interaction with nAChR.

Belongs to the conotoxin A superfamily. As to expression, expressed by the venom duct.

It is found in the secreted. Functionally, alpha-conotoxins act on postsynaptic membranes, they bind to the nicotinic acetylcholine receptors (nAChR) and thus inhibit them. Has possibly a distinct nAChR binding mode from other alpha-conotoxins, due to a different three residue motif (lacks the Ser-Xaa-Pro motif). This is Alpha-conotoxin-like Pu1.6 from Conus pulicarius (Flea-bitten cone).